A 914-amino-acid polypeptide reads, in one-letter code: Neuropilin-1 (914 aa).

The signal sequence occupies residues 1–18 (MDWGLFLHCAALTFTLSR). The Extracellular portion of the chain corresponds to 20–847 (LRSDKCGDTI…PGNVLKTLDP (828 aa)). Cystine bridges form between Cys-25/Cys-52, Cys-80/Cys-102, and Cys-145/Cys-171. 2 consecutive CUB domains span residues 25–139 (CGDT…YEVF) and 145–263 (CSRN…YSVS). The N-linked (GlcNAc...) asparagine glycan is linked to Asn-148. Ca(2+) is bound by residues Glu-193, Asp-207, and Asp-248. Cys-204 and Cys-226 are disulfide-bonded. An N-linked (GlcNAc...) asparagine glycan is attached at Asn-259. 2 disulfides stabilise this stretch: Cys-273/Cys-422 and Cys-429/Cys-581. F5/8 type C domains are found at residues 273 to 422 (CMEP…VYGC) and 429 to 581 (CSGM…LLGC). N-linked (GlcNAc...) asparagine glycosylation is present at Asn-520. An O-linked (Xyl...) (chondroitin sulfate) serine; alternate glycan is attached at Ser-610. Ser-610 carries an O-linked (Xyl...) (heparan sulfate) serine; alternate glycan. The MAM domain maps to 636–801 (PYNLNCGFGW…NHISQEDCQK (166 aa)). Positions 809 to 829 (IVEEDPESNQTGFTPSYRTDE) are disordered. A compositionally biased stretch (polar residues) spans 816–825 (SNQTGFTPSY). N-linked (GlcNAc...) asparagine glycosylation is present at Asn-817. A helical membrane pass occupies residues 848-870 (ILITIIAMSALGVLLGAICGVVL). Residues 871–914 (YCACWHNGMSERNLSALENYNFELVDGVKLKKDKLNTQNSYSEA) lie on the Cytoplasmic side of the membrane.

It belongs to the neuropilin family. As to quaternary structure, homodimer, and heterodimer. As to expression, developing nervous system; optic tectum (layers D and E of SGFS), amacrine cells of retina, neurites of dorsal root ganglia. Also expressed in non-neuronal cells, e.g. blood vessels in the entire embryo.

The protein localises to the mitochondrion membrane. It localises to the cell membrane. In terms of biological role, receptor involved in the development of the cardiovascular system, in angiogenesis, in the formation of certain neuronal circuits and in organogenesis outside the nervous system. Mediates the chemorepulsant activity of semaphorins. Binding to VEGFA initiates a signaling pathway needed for motor neuron axon guidance and cell body migration, including for the caudal migration of facial motor neurons from rhombomere 4 to rhombomere 6 during embryonic development. Regulates mitochondrial iron transport via interaction. The protein is Neuropilin-1 (NRP1) of Gallus gallus (Chicken).